The following is a 245-amino-acid chain: 5-oxoprolinase subunit A (245 aa).

Belongs to the LamB/PxpA family. As to quaternary structure, forms a complex composed of PxpA, PxpB and PxpC.

It catalyses the reaction 5-oxo-L-proline + ATP + 2 H2O = L-glutamate + ADP + phosphate + H(+). In terms of biological role, catalyzes the cleavage of 5-oxoproline to form L-glutamate coupled to the hydrolysis of ATP to ADP and inorganic phosphate. This is 5-oxoprolinase subunit A from Neisseria meningitidis serogroup C (strain 053442).